Reading from the N-terminus, the 114-residue chain is Cytochrome c oxidase subunit 7A2-like, mitochondrial (114 aa).

The transit peptide at 1–55 directs the protein to the mitochondrion; the sequence is MYYKFSGFTQKLAGAWASDAYSPQGLRPVVSTEAPPIIFATPTKLSSGPTAYDYA. An N6-acetyllysine modification is found at lysine 69. The chain crosses the membrane as a helical span at residues 82–107; it reads PDQMLYRTTMALTVGGTIYCLIALYM.

It belongs to the cytochrome c oxidase VIIa family. In terms of assembly, interacts with the mitochondrial respiratory complexes III (CIII) and IV (CIV), promoting their association.

It localises to the mitochondrion inner membrane. Its function is as follows. Assembly factor that mediates the formation of some mitochondrial respiratory supercomplexes (respirasomes), thereby promoting oxidative phosphorylation and energy metabolism. Acts as a molecular adapter that associates with both mitochondrial respiratory complexes III (CIII) and IV (CIV), promoting their association. Mediates the formation of various mitochondrial respiratory supercomplexes, such as MCIII(2)IV(2), composed of two CIII and two CIV, and the CS-respirasome (MCI(1)III(2)IV(2)), composed of one CI, two CIII and two CIV. Not involved in the formation of the canonical respirasome (MCI(1)III(2)IV(1)), composed of one CI, two CIII and one CIV. The formation of different respirasomes is important for cell adaptation to oxygen conditions and prevent metabolic exhaustion: supercomplexes mediated by COX7A2L/SCAF1 are required to maintain oxidative phosphorylation upon low oxygen conditions and promote metabolic rewiring toward glycolysis. This chain is Cytochrome c oxidase subunit 7A2-like, mitochondrial, found in Bos taurus (Bovine).